The chain runs to 443 residues: Tol-Pal system protein TolB (443 aa).

The signal sequence occupies residues 1–33 (MKIGIINTKIRTVFSAFACMIAASLVCTMPARA).

The protein belongs to the TolB family. The Tol-Pal system is composed of five core proteins: the inner membrane proteins TolA, TolQ and TolR, the periplasmic protein TolB and the outer membrane protein Pal. They form a network linking the inner and outer membranes and the peptidoglycan layer.

The protein resides in the periplasm. Functionally, part of the Tol-Pal system, which plays a role in outer membrane invagination during cell division and is important for maintaining outer membrane integrity. The chain is Tol-Pal system protein TolB from Brucella melitensis biotype 1 (strain ATCC 23456 / CCUG 17765 / NCTC 10094 / 16M).